The following is a 261-amino-acid chain: Acyl-[acyl-carrier-protein]--UDP-N-acetylglucosamine O-acyltransferase (261 aa).

It belongs to the transferase hexapeptide repeat family. LpxA subfamily. As to quaternary structure, homotrimer.

The protein resides in the cytoplasm. It carries out the reaction a (3R)-hydroxyacyl-[ACP] + UDP-N-acetyl-alpha-D-glucosamine = a UDP-3-O-[(3R)-3-hydroxyacyl]-N-acetyl-alpha-D-glucosamine + holo-[ACP]. It functions in the pathway glycolipid biosynthesis; lipid IV(A) biosynthesis; lipid IV(A) from (3R)-3-hydroxytetradecanoyl-[acyl-carrier-protein] and UDP-N-acetyl-alpha-D-glucosamine: step 1/6. In terms of biological role, involved in the biosynthesis of lipid A, a phosphorylated glycolipid that anchors the lipopolysaccharide to the outer membrane of the cell. In Paracoccus denitrificans (strain Pd 1222), this protein is Acyl-[acyl-carrier-protein]--UDP-N-acetylglucosamine O-acyltransferase.